The chain runs to 214 residues: Octanoyltransferase (214 aa).

The 177-residue stretch at 35-211 (KSNIDFIWLG…IIQEEFYFNF (177 aa)) folds into the BPL/LPL catalytic domain. Residues 75 to 82 (RGGEVTCH), 142 to 144 (SIG), and 155 to 157 (GFS) contribute to the substrate site. The Acyl-thioester intermediate role is filled by Cys-173.

The protein belongs to the LipB family.

It is found in the cytoplasm. It catalyses the reaction octanoyl-[ACP] + L-lysyl-[protein] = N(6)-octanoyl-L-lysyl-[protein] + holo-[ACP] + H(+). Its pathway is protein modification; protein lipoylation via endogenous pathway; protein N(6)-(lipoyl)lysine from octanoyl-[acyl-carrier-protein]: step 1/2. Catalyzes the transfer of endogenously produced octanoic acid from octanoyl-acyl-carrier-protein onto the lipoyl domains of lipoate-dependent enzymes. Lipoyl-ACP can also act as a substrate although octanoyl-ACP is likely to be the physiological substrate. This Prochlorococcus marinus (strain MIT 9515) protein is Octanoyltransferase.